A 284-amino-acid chain; its full sequence is tRNA pseudouridine synthase A (284 aa).

Catalysis depends on Asp-62, which acts as the Nucleophile. Tyr-120 contacts substrate.

This sequence belongs to the tRNA pseudouridine synthase TruA family. In terms of assembly, homodimer.

It carries out the reaction uridine(38/39/40) in tRNA = pseudouridine(38/39/40) in tRNA. Functionally, formation of pseudouridine at positions 38, 39 and 40 in the anticodon stem and loop of transfer RNAs. This chain is tRNA pseudouridine synthase A, found in Thermosynechococcus vestitus (strain NIES-2133 / IAM M-273 / BP-1).